A 313-amino-acid chain; its full sequence is uncharacterized protein (313 aa).

The tract at residues 1–313 is disordered; sequence MSRNGRNDYD…SSSRSGSSRR (313 aa). Composition is skewed to basic and acidic residues over residues 24-33, 40-85, 95-116, and 156-181; these read LARDRERDSE, TGER…DVKY, TTRE…DELG, and TDER…DEFG. Positions 194–205 are enriched in basic residues; it reads RGRRSNSRRRSS. 2 stretches are compositionally biased toward low complexity: residues 206-266 and 272-313; these read NARS…GSKS and SRSG…SSRR.

Its subcellular location is the virion. This is an uncharacterized protein from Acanthamoeba polyphaga mimivirus (APMV).